Here is a 483-residue protein sequence, read N- to C-terminus: Probable cytochrome P450 517A1 (483 aa).

A helical transmembrane segment spans residues 1–21; the sequence is MEIINVFLFLIILFLVKDFVK. Residue Cys-429 coordinates heme.

Belongs to the cytochrome P450 family. Requires heme as cofactor.

Its subcellular location is the membrane. In Dictyostelium discoideum (Social amoeba), this protein is Probable cytochrome P450 517A1 (cyp517A1).